The sequence spans 830 residues: Penicillin-binding protein 1A (830 aa).

Over 1-18 (MGKKKKKRKSSAFKIILN) the chain is Cytoplasmic. A helical; Signal-anchor for type II membrane protein membrane pass occupies residues 19-39 (VFLSIFLVAGVAFGGIVFAMI). Over 40 to 830 (KTAPPLNVQQ…QNHEDNKNKQ (791 aa)) the chain is Extracellular. A transglycosylase region spans residues 57–229 (SILYDDKGQY…PSVYYPYSSA (173 aa)). Glutamate 96 acts as the Proton donor; for transglycosylase activity in catalysis. Residues 357-641 (ASAVIMDYHN…AARLWGDIMK (285 aa)) are transpeptidase. Serine 398 acts as the Acyl-ester intermediate; for transpeptidase activity in catalysis. Residues 754–830 (GGSLPPTEEK…QNHEDNKNKQ (77 aa)) are disordered. Residues 760 to 786 (TEEKNNSNTRDKNKDKNKNKNKDKNPS) are compositionally biased toward basic and acidic residues. Low complexity predominate over residues 787 to 820 (QDKPNNNNNDNNSNNNNNNNDNNNNTKPPENDSN). Over residues 821-830 (QNHEDNKNKQ) the composition is skewed to basic and acidic residues.

The protein in the N-terminal section; belongs to the glycosyltransferase 51 family. It in the C-terminal section; belongs to the transpeptidase family.

It localises to the cell membrane. It catalyses the reaction [GlcNAc-(1-&gt;4)-Mur2Ac(oyl-L-Ala-gamma-D-Glu-L-Lys-D-Ala-D-Ala)](n)-di-trans,octa-cis-undecaprenyl diphosphate + beta-D-GlcNAc-(1-&gt;4)-Mur2Ac(oyl-L-Ala-gamma-D-Glu-L-Lys-D-Ala-D-Ala)-di-trans,octa-cis-undecaprenyl diphosphate = [GlcNAc-(1-&gt;4)-Mur2Ac(oyl-L-Ala-gamma-D-Glu-L-Lys-D-Ala-D-Ala)](n+1)-di-trans,octa-cis-undecaprenyl diphosphate + di-trans,octa-cis-undecaprenyl diphosphate + H(+). It carries out the reaction Preferential cleavage: (Ac)2-L-Lys-D-Ala-|-D-Ala. Also transpeptidation of peptidyl-alanyl moieties that are N-acyl substituents of D-alanine.. Its pathway is cell wall biogenesis; peptidoglycan biosynthesis. Functionally, cell wall formation. Synthesis of cross-linked peptidoglycan from the lipid intermediates. The enzyme has a penicillin-insensitive transglycosylase N-terminal domain (formation of linear glycan strands) and a penicillin-sensitive transpeptidase C-terminal domain (cross-linking of the peptide subunits). The chain is Penicillin-binding protein 1A (pbpA) from Clostridium botulinum (strain Hall / ATCC 3502 / NCTC 13319 / Type A).